We begin with the raw amino-acid sequence, 391 residues long: UPF0229 protein CLL_A3091 (391 aa).

Disordered stretches follow at residues 1–23 (MAIF…DKRR) and 75–107 (VATG…GNEE). Basic and acidic residues predominate over residues 80 to 92 (GEEKRGDKIESGS).

The protein belongs to the UPF0229 family.

This chain is UPF0229 protein CLL_A3091, found in Clostridium botulinum (strain Eklund 17B / Type B).